The primary structure comprises 140 residues: ATP synthase epsilon chain (140 aa).

It belongs to the ATPase epsilon chain family. F-type ATPases have 2 components, CF(1) - the catalytic core - and CF(0) - the membrane proton channel. CF(1) has five subunits: alpha(3), beta(3), gamma(1), delta(1), epsilon(1). CF(0) has three main subunits: a, b and c.

The protein resides in the cell inner membrane. Produces ATP from ADP in the presence of a proton gradient across the membrane. The polypeptide is ATP synthase epsilon chain (Xanthomonas oryzae pv. oryzae (strain MAFF 311018)).